The chain runs to 152 residues: ESAT-6 secretion machinery protein EssA (152 aa).

Residues 1–114 (MLMNSVIALT…PYIQNKQEKK (114 aa)) are Cytoplasmic-facing. The segment at 62–83 (ERQQQIKNDMFQNQASHSTRLN) is disordered. A compositionally biased stretch (polar residues) spans 66–80 (QIKNDMFQNQASHST). The chain crosses the membrane as a helical span at residues 115-135 (IFPYILMSVGAFLTLGFVIFS). The Extracellular segment spans residues 136-152 (IHKGRRTKNESARKSNI).

It belongs to the EssA family.

The protein resides in the cell membrane. Component of the ESAT-6 secretion system (Ess). Required for the secretion of EsxA and EsxB. This is ESAT-6 secretion machinery protein EssA from Staphylococcus aureus (strain COL).